The chain runs to 1049 residues: Multidrug efflux pump subunit AcrB (1049 aa).

Residues Met1–Pro9 lie on the Cytoplasmic side of the membrane. A helical transmembrane segment spans residues Ile10–Leu28. Over Lys29–Ser336 the chain is Periplasmic. Residues Ile337 to Tyr356 traverse the membrane as a helical segment. Topologically, residues Leu357–Thr365 are cytoplasmic. A helical transmembrane segment spans residues Leu366 to Ala385. Residues Phe386 to Asn391 lie on the Periplasmic side of the membrane. A helical membrane pass occupies residues Thr392–Val413. Over Glu414–Ile438 the chain is Cytoplasmic. The helical transmembrane segment at Gln439–Ala457 threads the bilayer. Topologically, residues Phe458–Ala465 are periplasmic. A helical transmembrane segment spans residues Ile466–Pro490. The Cytoplasmic segment spans residues Ala491–Thr538. Residues Gly539 to Leu555 form a helical membrane-spanning segment. The Periplasmic portion of the chain corresponds to Phe556 to Asn871. Residues Gln872–Leu888 form a helical membrane-spanning segment. Topologically, residues Ala889–Pro898 are cytoplasmic. The chain crosses the membrane as a helical span at residues Phe899–Phe918. Over Arg919–Asp924 the chain is Periplasmic. Residues Val925–Ile943 form a helical membrane-spanning segment. The Cytoplasmic segment spans residues Leu944 to Leu972. A helical transmembrane segment spans residues Arg973–Ser992. At Thr993 to Gly998 the chain is on the periplasmic side. A helical transmembrane segment spans residues Ala999–Ala1018. The Cytoplasmic segment spans residues Ile1019 to His1049.

Belongs to the resistance-nodulation-cell division (RND) (TC 2.A.6) family. As to quaternary structure, homotrimer, with large domains that extend into the periplasm, interacts with AcrA and TolC. AcrA may be required to stably link this protein and TolC. Interacts with AcrZ. Part of the AcrA-AcrB-AcrZ-TolC efflux pump.

It localises to the cell inner membrane. Functionally, acrA-AcrB-AcrZ-TolC is a drug efflux protein complex with broad substrate specificity that uses the proton motive force to export substrates. Its function is as follows. (Microbial infection) Involved in contact-dependent growth inhibition (CDI), acts downstream of BamA, the receptor for CDI. Its role in CDI is independent of the AcrA-AcrB-TolC efflux pump complex. This chain is Multidrug efflux pump subunit AcrB (acrB), found in Escherichia coli (strain K12).